A 72-amino-acid chain; its full sequence is MSKVCLLTGKRPIYGNTVSHANNHVRTRFEPNLHTKRIWIEEEKRFVKVKLSAKAMTIIAKTGTATLAKLLK.

This sequence belongs to the bacterial ribosomal protein bL28 family.

In Pelodictyon phaeoclathratiforme (strain DSM 5477 / BU-1), this protein is Large ribosomal subunit protein bL28.